A 192-amino-acid chain; its full sequence is Erythropoietin (192 aa).

The first 25 residues, M1–G25, serve as a signal peptide directing secretion. Intrachain disulfides connect C32/C187 and C54/C58. An N-linked (GlcNAc...) asparagine glycan is attached at N49. N63 and N108 each carry an N-linked (GlcNAc...) asparagine glycan.

It belongs to the EPO/TPO family. Produced by kidney or liver of adult mammals and by liver of fetal or neonatal mammals.

Its subcellular location is the secreted. Functionally, hormone involved in the regulation of erythrocyte proliferation and differentiation and the maintenance of a physiological level of circulating erythrocyte mass. Binds to EPOR leading to EPOR dimerization and JAK2 activation thereby activating specific downstream effectors, including STAT1 and STAT3. This Bos taurus (Bovine) protein is Erythropoietin (EPO).